Consider the following 129-residue polypeptide: Small ribosomal subunit protein uS8 (129 aa).

It belongs to the universal ribosomal protein uS8 family. In terms of assembly, part of the 30S ribosomal subunit. Contacts proteins S5 and S12.

One of the primary rRNA binding proteins, it binds directly to 16S rRNA central domain where it helps coordinate assembly of the platform of the 30S subunit. The sequence is that of Small ribosomal subunit protein uS8 from Mesoplasma florum (strain ATCC 33453 / NBRC 100688 / NCTC 11704 / L1) (Acholeplasma florum).